The primary structure comprises 510 residues: ATP synthase subunit alpha, chloroplastic (510 aa).

Gly-170–Thr-177 lines the ATP pocket.

This sequence belongs to the ATPase alpha/beta chains family. F-type ATPases have 2 components, CF(1) - the catalytic core - and CF(0) - the membrane proton channel. CF(1) has five subunits: alpha(3), beta(3), gamma(1), delta(1), epsilon(1). CF(0) has four main subunits: a, b, b' and c.

Its subcellular location is the plastid. It is found in the chloroplast thylakoid membrane. It catalyses the reaction ATP + H2O + 4 H(+)(in) = ADP + phosphate + 5 H(+)(out). Its function is as follows. Produces ATP from ADP in the presence of a proton gradient across the membrane. The alpha chain is a regulatory subunit. This is ATP synthase subunit alpha, chloroplastic from Lotus japonicus (Lotus corniculatus var. japonicus).